Consider the following 336-residue polypeptide: Putative transcription factor avaE (336 aa).

The segment at residues threonine 32–proline 100 is a DNA-binding region (WRKY).

The protein localises to the nucleus. It participates in secondary metabolite biosynthesis. In terms of biological role, putative transcription factor; part of the cluster that mediates the biosynthesis of a highly modified cyclo-arginine-tryptophan dipeptide (cRW). The chain is Putative transcription factor avaE from Aspergillus versicolor.